The chain runs to 422 residues: Serine hydroxymethyltransferase (422 aa).

(6S)-5,6,7,8-tetrahydrofolate is bound by residues Leu-120 and 124–126 (GHL). Lys-228 bears the N6-(pyridoxal phosphate)lysine mark.

This sequence belongs to the SHMT family. In terms of assembly, homodimer. Pyridoxal 5'-phosphate serves as cofactor.

Its subcellular location is the cytoplasm. The catalysed reaction is (6R)-5,10-methylene-5,6,7,8-tetrahydrofolate + glycine + H2O = (6S)-5,6,7,8-tetrahydrofolate + L-serine. It participates in one-carbon metabolism; tetrahydrofolate interconversion. It functions in the pathway amino-acid biosynthesis; glycine biosynthesis; glycine from L-serine: step 1/1. Functionally, catalyzes the reversible interconversion of serine and glycine with tetrahydrofolate (THF) serving as the one-carbon carrier. This reaction serves as the major source of one-carbon groups required for the biosynthesis of purines, thymidylate, methionine, and other important biomolecules. Also exhibits THF-independent aldolase activity toward beta-hydroxyamino acids, producing glycine and aldehydes, via a retro-aldol mechanism. This Actinobacillus succinogenes (strain ATCC 55618 / DSM 22257 / CCUG 43843 / 130Z) protein is Serine hydroxymethyltransferase.